A 133-amino-acid chain; its full sequence is MVMLDTLANAMAAIVNAEMRAKPEVIIMPASKLIANVLRVMQREGYIGEFEYIDDGRWGKIRVRLLGRINKAGVIKPRFSVKYKDLIRMPDWLRKYLPSRDIGILIISTSQGVMSHREAIQRRIGGVLLAYVY.

Belongs to the universal ribosomal protein uS8 family. Part of the 30S ribosomal subunit.

One of the primary rRNA binding proteins, it binds directly to 16S rRNA central domain where it helps coordinate assembly of the platform of the 30S subunit. This Hyperthermus butylicus (strain DSM 5456 / JCM 9403 / PLM1-5) protein is Small ribosomal subunit protein uS8.